The sequence spans 40 residues: Omega-conotoxin RsXXVIA (40 aa).

Contains 4 disulfide bonds. As to expression, expressed by the venom duct.

It localises to the secreted. In terms of biological role, omega-conotoxins act at presynaptic membranes, they bind and block voltage-gated calcium channels (Cav). This toxin inhibits rat Cav2.2/CACNA1B calcium channels in a dose-dependent manner (EC(50)=2.8 uM), whose effect is partially reversed after washing. In vivo, when injected into mice, it shows both an analgesic effect in acute thermal pain at 30 and 45 minutes post-injection and an anti-nociceptive effect in a formalin chronic pain test. This chain is Omega-conotoxin RsXXVIA, found in Conus regularis (Regular cone).